Consider the following 218-residue polypeptide: Redox-sensing transcriptional repressor Rex (218 aa).

Residues 25 to 64 constitute a DNA-binding region (H-T-H motif); that stretch reads WYLSYVQLLHADGCESVSSTRIARAVGVDASLVAKDLSYV. 99-104 provides a ligand contact to NAD(+); sequence GVGSLG.

It belongs to the transcriptional regulatory Rex family. As to quaternary structure, homodimer.

The protein resides in the cytoplasm. Modulates transcription in response to changes in cellular NADH/NAD(+) redox state. The protein is Redox-sensing transcriptional repressor Rex of Porphyromonas gingivalis (strain ATCC BAA-308 / W83).